A 52-amino-acid chain; its full sequence is DNA-directed RNA polymerase subunit Rpo12 (52 aa).

Zn(2+)-binding residues include C13, C30, and C33.

The protein belongs to the archaeal Rpo12/eukaryotic RPC10 RNA polymerase subunit family. In terms of assembly, part of the RNA polymerase complex. It depends on Zn(2+) as a cofactor.

The protein resides in the cytoplasm. The enzyme catalyses RNA(n) + a ribonucleoside 5'-triphosphate = RNA(n+1) + diphosphate. DNA-dependent RNA polymerase (RNAP) catalyzes the transcription of DNA into RNA using the four ribonucleoside triphosphates as substrates. The protein is DNA-directed RNA polymerase subunit Rpo12 of Pyrobaculum arsenaticum (strain DSM 13514 / JCM 11321 / PZ6).